Here is an 89-residue protein sequence, read N- to C-terminus: Small ribosomal subunit protein uS15 (89 aa).

This sequence belongs to the universal ribosomal protein uS15 family. In terms of assembly, part of the 30S ribosomal subunit. Forms a bridge to the 50S subunit in the 70S ribosome, contacting the 23S rRNA.

Functionally, one of the primary rRNA binding proteins, it binds directly to 16S rRNA where it helps nucleate assembly of the platform of the 30S subunit by binding and bridging several RNA helices of the 16S rRNA. Its function is as follows. Forms an intersubunit bridge (bridge B4) with the 23S rRNA of the 50S subunit in the ribosome. This is Small ribosomal subunit protein uS15 from Solibacter usitatus (strain Ellin6076).